The chain runs to 296 residues: 4-hydroxy-tetrahydrodipicolinate synthase (296 aa).

Pyruvate is bound at residue Thr47. The Proton donor/acceptor role is filled by Tyr136. The Schiff-base intermediate with substrate role is filled by Lys164. Position 206 (Val206) interacts with pyruvate.

The protein belongs to the DapA family. As to quaternary structure, homotetramer; dimer of dimers.

The protein localises to the cytoplasm. The catalysed reaction is L-aspartate 4-semialdehyde + pyruvate = (2S,4S)-4-hydroxy-2,3,4,5-tetrahydrodipicolinate + H2O + H(+). Its pathway is amino-acid biosynthesis; L-lysine biosynthesis via DAP pathway; (S)-tetrahydrodipicolinate from L-aspartate: step 3/4. In terms of biological role, catalyzes the condensation of (S)-aspartate-beta-semialdehyde [(S)-ASA] and pyruvate to 4-hydroxy-tetrahydrodipicolinate (HTPA). This chain is 4-hydroxy-tetrahydrodipicolinate synthase, found in Thermosynechococcus vestitus (strain NIES-2133 / IAM M-273 / BP-1).